The sequence spans 1222 residues: ATP-dependent helicase/nuclease subunit A (1222 aa).

The region spanning Q39 to Q495 is the UvrD-like helicase ATP-binding domain. A60 to T67 contributes to the ATP binding site. Residues Q524–G810 enclose the UvrD-like helicase C-terminal domain.

Belongs to the helicase family. AddA subfamily. In terms of assembly, heterodimer of AddA and AddB/RexB. Mg(2+) is required as a cofactor.

It carries out the reaction Couples ATP hydrolysis with the unwinding of duplex DNA by translocating in the 3'-5' direction.. The enzyme catalyses ATP + H2O = ADP + phosphate + H(+). Functionally, the heterodimer acts as both an ATP-dependent DNA helicase and an ATP-dependent, dual-direction single-stranded exonuclease. Recognizes the chi site generating a DNA molecule suitable for the initiation of homologous recombination. The AddA nuclease domain is required for chi fragment generation; this subunit has the helicase and 3' -&gt; 5' nuclease activities. The polypeptide is ATP-dependent helicase/nuclease subunit A (Streptococcus pyogenes serotype M3 (strain ATCC BAA-595 / MGAS315)).